The sequence spans 208 residues: Uracil phosphoribosyltransferase (208 aa).

5-phospho-alpha-D-ribose 1-diphosphate is bound by residues arginine 77, arginine 102, and 129 to 137 (DPMLATGNS). Residues isoleucine 193 and 198–200 (GDA) contribute to the uracil site. Aspartate 199 is a 5-phospho-alpha-D-ribose 1-diphosphate binding site.

Belongs to the UPRTase family. Mg(2+) serves as cofactor.

The enzyme catalyses UMP + diphosphate = 5-phospho-alpha-D-ribose 1-diphosphate + uracil. The protein operates within pyrimidine metabolism; UMP biosynthesis via salvage pathway; UMP from uracil: step 1/1. Allosterically activated by GTP. In terms of biological role, catalyzes the conversion of uracil and 5-phospho-alpha-D-ribose 1-diphosphate (PRPP) to UMP and diphosphate. The protein is Uracil phosphoribosyltransferase of Mycoplasmopsis pulmonis (strain UAB CTIP) (Mycoplasma pulmonis).